A 264-amino-acid chain; its full sequence is tRNA pseudouridine synthase A (264 aa).

Asp-51 (nucleophile) is an active-site residue. A substrate-binding site is contributed by Tyr-109.

This sequence belongs to the tRNA pseudouridine synthase TruA family. Homodimer.

It carries out the reaction uridine(38/39/40) in tRNA = pseudouridine(38/39/40) in tRNA. Functionally, formation of pseudouridine at positions 38, 39 and 40 in the anticodon stem and loop of transfer RNAs. This is tRNA pseudouridine synthase A from Pseudoalteromonas translucida (strain TAC 125).